Here is a 445-residue protein sequence, read N- to C-terminus: Argininosuccinate lyase (445 aa).

The protein belongs to the lyase 1 family. Argininosuccinate lyase subfamily.

It is found in the cytoplasm. It carries out the reaction 2-(N(omega)-L-arginino)succinate = fumarate + L-arginine. The protein operates within amino-acid biosynthesis; L-arginine biosynthesis; L-arginine from L-ornithine and carbamoyl phosphate: step 3/3. The protein is Argininosuccinate lyase of Xylella fastidiosa (strain 9a5c).